A 432-amino-acid polypeptide reads, in one-letter code: Tol-Pal system protein TolB (432 aa).

A signal peptide spans 1–21; sequence MKKVIYTIVGFVFMWSTSVYA.

The protein belongs to the TolB family. The Tol-Pal system is composed of five core proteins: the inner membrane proteins TolA, TolQ and TolR, the periplasmic protein TolB and the outer membrane protein Pal. They form a network linking the inner and outer membranes and the peptidoglycan layer.

Its subcellular location is the periplasm. Part of the Tol-Pal system, which plays a role in outer membrane invagination during cell division and is important for maintaining outer membrane integrity. This chain is Tol-Pal system protein TolB, found in Hydrogenovibrio crunogenus (strain DSM 25203 / XCL-2) (Thiomicrospira crunogena).